Here is a 419-residue protein sequence, read N- to C-terminus: Tyrosine--tRNA ligase (419 aa).

Tyr34 is an L-tyrosine binding site. The 'HIGH' region signature appears at 39-48 (PTADSLHLGN). Positions 169 and 173 each coordinate L-tyrosine. The short motif at 229–233 (KFGKS) is the 'KMSKS' region element. An ATP-binding site is contributed by Lys232. The S4 RNA-binding domain maps to 353-419 (LTLIELLISV…GKKKNFVLTY (67 aa)).

This sequence belongs to the class-I aminoacyl-tRNA synthetase family. TyrS type 1 subfamily. Homodimer.

The protein localises to the cytoplasm. It carries out the reaction tRNA(Tyr) + L-tyrosine + ATP = L-tyrosyl-tRNA(Tyr) + AMP + diphosphate + H(+). In terms of biological role, catalyzes the attachment of tyrosine to tRNA(Tyr) in a two-step reaction: tyrosine is first activated by ATP to form Tyr-AMP and then transferred to the acceptor end of tRNA(Tyr). The sequence is that of Tyrosine--tRNA ligase from Lactococcus lactis subsp. cremoris (strain MG1363).